Here is a 678-residue protein sequence, read N- to C-terminus: MNVLFLSYNICILFFVVCTLNFSTKCFSNGLLKNQNILNKSFDSITGRLLNETELEKNKDDNSKSETLLKEEKDEKDDVPTTSNDNLKNAHNNNEISSSTDPTNIINVNDKDNENSVDKKKDKKEKKHKKDKKEKKEKKDKKEKKDKKEKKHKKEKKHKKDKKKKENSEVMSLYKTGQHKPKNATEHGEENLDEEMVSEINNNAQGGLLLSSPYQYREQGGCGIISSVHETSNDTKDNDKENISEDKKEDHQQEEMLKTLDKKERKQKEKEMKEQEKIEKKKKKQEEKEKKKQEKERKKQEKKERKQKEKEMKKQKKIEKERKKKEEKEKKKKKHDKENEETMQQPDQTSEETNNEIMVPLPSPLTDVTTPEEHKEGEHKEEEHKEGEHKEGEHKEEEHKEEEHKKEEHKSKEHKSKGKKDKGKKDKGKHKKAKKEKVKKHVVKNVIEDEDKDGVEIINLEDKEACEEQHITVESRPLSQPQCKLIDEPEQLTLMDKSKVEEKNLSIQEQLIGTIGRVNVVPRRDNHKKKMAKIEEAELQKQKHVDKEEDKKEESKEVQEESKEVQEDEEEVEEDEEEEEEEEEEEEEEEEEEEEEEEEEEEEEEDEDEEDEDDAEEDEDDAEEDEDDAEEDDDEEDDDEEDDDEDEDEDEEDEEEEEEEEEESEKKIKRNLRKNAKI.

The N-terminal stretch at 1-25 (MNVLFLSYNICILFFVVCTLNFSTK) is a signal peptide. Residues 56-79 (EKNKDDNSKSETLLKEEKDEKDDV) are compositionally biased toward basic and acidic residues. 3 disordered regions span residues 56–194 (EKNK…NLDE), 225–445 (ISSV…VVKN), and 520–678 (VVPR…NAKI). The segment covering 80–107 (PTTSNDNLKNAHNNNEISSSTDPTNIIN) has biased composition (polar residues). Positions 109–120 (NDKDNENSVDKK) are enriched in basic and acidic residues. 15 repeat units span residues 120–122 (KKD), 123–125 (KKE), 126–128 (KKH), 129–131 (KKD), 132–134 (KKE), 135–137 (KKE), 138–140 (KKD), 141–143 (KKE), 144–146 (KKD), 147–149 (KKE), 150–152 (KKH), 153–155 (KKE), 156–158 (KKH), 159–161 (KKD), and 162–164 (KKK). Residues 120–164 (KKDKKEKKHKKDKKEKKEKKDKKEKKDKKEKKHKKEKKHKKDKKK) are 15 X 3 AA tandem repeats of K-K-[DEHK]. Over residues 121–165 (KDKKEKKHKKDKKEKKEKKDKKEKKDKKEKKHKKEKKHKKDKKKK) the composition is skewed to basic residues. 2 stretches are compositionally biased toward basic and acidic residues: residues 231-329 (TSND…EEKE) and 371-411 (PEEH…EHKS). Tandem repeats lie at residues 372–376 (EEHKE), 377–381 (GEHKE), 382–386 (EEHKE), 387–391 (GEHKE), 392–396 (GEHKE), 397–401 (EEHKE), 402–406 (EEHKK), 407–411 (EEHKS), 412–416 (KEHKS), 417–421 (KGKKD), 422–426 (KGKKD), 427–431 (KGKHK), 432–436 (KAKKE), and 437–441 (KVKKH). Residues 372-416 (EEHKEGEHKEEEHKEGEHKEGEHKEEEHKEEEHKKEEHKSKEHKS) form a 9 X 5 AA tandem repeats of [EGK]-E-H-K-[EKS] region. Positions 412–443 (KEHKSKGKKDKGKKDKGKHKKAKKEKVKKHVV) are enriched in basic residues. Residues 417-441 (KGKKDKGKKDKGKHKKAKKEKVKKH) are 5 X 5 AA tandem repeats of K-[GAV]-K-[KH]-[DKEH]. The span at 532–565 (AKIEEAELQKQKHVDKEEDKKEESKEVQEESKEV) shows a compositional bias: basic and acidic residues. The span at 566–663 (QEDEEEVEED…EEEEEEEEEE (98 aa)) shows a compositional bias: acidic residues. Residues 667–678 (KIKRNLRKNAKI) show a composition bias toward basic residues.

The sequence is that of Glutamic acid-rich protein (GARP) from Plasmodium falciparum (isolate FC27 / Papua New Guinea).